The primary structure comprises 194 residues: uncharacterized protein (194 aa).

In terms of domain architecture, Exonuclease spans 20–185 (RIFIDTETTG…ADCRMTLGII (166 aa)).

This is an uncharacterized protein from Escherichia coli (Bacteriophage 186).